We begin with the raw amino-acid sequence, 210 residues long: Putative biopolymer transport protein ExbB-like 3 (210 aa).

3 consecutive transmembrane segments (helical) span residues 2 to 22 (AGGI…ALII), 104 to 124 (LFQT…ILGL), and 152 to 172 (LVST…ANVF).

This sequence belongs to the ExbB/TolQ family.

It localises to the cell inner membrane. Functionally, involved in the TonB-dependent energy-dependent transport of various receptor-bound substrates. Protects ExbD from proteolytic degradation and functionally stabilizes TonB. The chain is Putative biopolymer transport protein ExbB-like 3 from Synechocystis sp. (strain ATCC 27184 / PCC 6803 / Kazusa).